The primary structure comprises 184 residues: ATP synthase subunit delta (184 aa).

It belongs to the ATPase delta chain family. F-type ATPases have 2 components, F(1) - the catalytic core - and F(0) - the membrane proton channel. F(1) has five subunits: alpha(3), beta(3), gamma(1), delta(1), epsilon(1). F(0) has three main subunits: a(1), b(2) and c(10-14). The alpha and beta chains form an alternating ring which encloses part of the gamma chain. F(1) is attached to F(0) by a central stalk formed by the gamma and epsilon chains, while a peripheral stalk is formed by the delta and b chains.

It localises to the cell inner membrane. Functionally, f(1)F(0) ATP synthase produces ATP from ADP in the presence of a proton or sodium gradient. F-type ATPases consist of two structural domains, F(1) containing the extramembraneous catalytic core and F(0) containing the membrane proton channel, linked together by a central stalk and a peripheral stalk. During catalysis, ATP synthesis in the catalytic domain of F(1) is coupled via a rotary mechanism of the central stalk subunits to proton translocation. Its function is as follows. This protein is part of the stalk that links CF(0) to CF(1). It either transmits conformational changes from CF(0) to CF(1) or is implicated in proton conduction. The protein is ATP synthase subunit delta of Rickettsia peacockii (strain Rustic).